The primary structure comprises 581 residues: Polypeptide N-acetylgalactosaminyltransferase 12 (581 aa).

Residues 1–19 (MWGRTARRRCPRELRRGRE) are Cytoplasmic-facing. The helical; Signal-anchor for type II membrane protein transmembrane segment at 20 to 37 (ALLVLLALLALAGLGSVL) threads the bilayer. Topologically, residues 38 to 581 (RAQRGAGAGA…QKWFFKERML (544 aa)) are lumenal. Residues 43 to 67 (AGAGAAEPGPPRTPRPGRREPVMPR) form a disordered region. Disulfide bonds link cysteine 125-cysteine 358, cysteine 349-cysteine 422, cysteine 458-cysteine 479, cysteine 506-cysteine 521, and cysteine 547-cysteine 566. Residues 135–244 (LPRTSVIIAF…EGWLEPLLQR (110 aa)) form a catalytic subdomain A region. The substrate site is built by aspartate 176 and arginine 205. The Mn(2+) site is built by aspartate 228 and histidine 230. The tract at residues 304–366 (VIRSPTMAGG…PCSHVGHVFP (63 aa)) is catalytic subdomain B. Residue tryptophan 335 coordinates substrate. Residue histidine 363 participates in Mn(2+) binding. Tyrosine 371 contacts substrate. Residues 445–577 (FFGMLQNKGL…NSDHQKWFFK (133 aa)) form the Ricin B-type lectin domain.

This sequence belongs to the glycosyltransferase 2 family. GalNAc-T subfamily. Mn(2+) is required as a cofactor. Widely expressed at different levels of expression. Highly expressed in digestive organs such as small intestine, stomach, pancreas and colon. Expressed at intermediate level in testis, thyroid gland and spleen. Weakly expressed in whole brain, cerebral cortex, cerebellum, fetal brain, bone marrow, thymus, leukocytes, heart, skeletal muscle, liver, lung, esophagus, kidney, adrenal gland, mammary gland, uterus, placenta, ovary and prostate.

It is found in the golgi apparatus membrane. It carries out the reaction L-seryl-[protein] + UDP-N-acetyl-alpha-D-galactosamine = a 3-O-[N-acetyl-alpha-D-galactosaminyl]-L-seryl-[protein] + UDP + H(+). The catalysed reaction is L-threonyl-[protein] + UDP-N-acetyl-alpha-D-galactosamine = a 3-O-[N-acetyl-alpha-D-galactosaminyl]-L-threonyl-[protein] + UDP + H(+). The protein operates within protein modification; protein glycosylation. In terms of biological role, catalyzes the initial reaction in O-linked oligosaccharide biosynthesis, the transfer of an N-acetyl-D-galactosamine residue to a serine or threonine residue on the protein receptor. Has activity toward non-glycosylated peptides such as Muc5AC, Muc1a and EA2, and no detectable activity with Muc2 and Muc7. Displays enzymatic activity toward the Gal-NAc-Muc5AC glycopeptide, but no detectable activity to mono-GalNAc-glycosylated Muc1a, Muc2, Muc7 and EA2. May play an important role in the initial step of mucin-type oligosaccharide biosynthesis in digestive organs. The polypeptide is Polypeptide N-acetylgalactosaminyltransferase 12 (GALNT12) (Homo sapiens (Human)).